A 501-amino-acid polypeptide reads, in one-letter code: Lysine--tRNA ligase (501 aa).

Glu-402 and Glu-409 together coordinate Mg(2+).

This sequence belongs to the class-II aminoacyl-tRNA synthetase family. Homodimer. Mg(2+) is required as a cofactor.

The protein resides in the cytoplasm. The catalysed reaction is tRNA(Lys) + L-lysine + ATP = L-lysyl-tRNA(Lys) + AMP + diphosphate. This chain is Lysine--tRNA ligase, found in Helicobacter pylori (strain P12).